We begin with the raw amino-acid sequence, 158 residues long: Mitotic-spindle organizing protein 2A (158 aa).

Phosphoserine is present on serine 34. The tract at residues 84 to 158 is disordered; sequence RLASEPQDPA…PGKSPTQGST (75 aa). Positions 112 to 122 are enriched in low complexity; it reads SAALGGVLALA. Over residues 128–140 the composition is skewed to polar residues; that stretch reads EGSSQRMPRQPSA. The residue at position 152 (serine 152) is a Phosphoserine.

This sequence belongs to the MOZART2 family. As to quaternary structure, associates with the gamma-tubulin ring complex (gTuRC) consisting of TUBGCP2, TUBGCP3, TUBGCP4, TUBGCP5 and TUBGCP6 and gamma-tubulin TUBG1 or TUBG2; within the complex, interacts with TUBGCP2; the interaction plays a role in gTuRC activation.

It localises to the cytoplasm. It is found in the cytoskeleton. The protein localises to the microtubule organizing center. Its subcellular location is the centrosome. The protein resides in the spindle. In terms of biological role, required for the recruitment and the assembly of the gamma-tubulin ring complex (gTuRC) at the centrosome. The gTuRC regulates the minus-end nucleation of alpha-beta tubulin heterodimers that grow into microtubule protafilaments, a critical step in centrosome duplication and spindle formation. In Homo sapiens (Human), this protein is Mitotic-spindle organizing protein 2A (MZT2A).